A 95-amino-acid chain; its full sequence is Cell division topological specificity factor (95 aa).

Belongs to the MinE family.

Its function is as follows. Prevents the cell division inhibition by proteins MinC and MinD at internal division sites while permitting inhibition at polar sites. This ensures cell division at the proper site by restricting the formation of a division septum at the midpoint of the long axis of the cell. This is Cell division topological specificity factor from Methylorubrum extorquens (strain PA1) (Methylobacterium extorquens).